The chain runs to 258 residues: 3-deoxy-manno-octulosonate cytidylyltransferase (258 aa).

The protein belongs to the KdsB family.

It localises to the cytoplasm. It catalyses the reaction 3-deoxy-alpha-D-manno-oct-2-ulosonate + CTP = CMP-3-deoxy-beta-D-manno-octulosonate + diphosphate. It participates in nucleotide-sugar biosynthesis; CMP-3-deoxy-D-manno-octulosonate biosynthesis; CMP-3-deoxy-D-manno-octulosonate from 3-deoxy-D-manno-octulosonate and CTP: step 1/1. The protein operates within bacterial outer membrane biogenesis; lipopolysaccharide biosynthesis. Functionally, activates KDO (a required 8-carbon sugar) for incorporation into bacterial lipopolysaccharide in Gram-negative bacteria. This chain is 3-deoxy-manno-octulosonate cytidylyltransferase, found in Gemmatimonas aurantiaca (strain DSM 14586 / JCM 11422 / NBRC 100505 / T-27).